A 151-amino-acid polypeptide reads, in one-letter code: MAALHWLLLAALLGCTLAEEQAIFYNCEEASEAVCSVKEVRINPCNPNKKCIFKKGVNASISFDFEPNFASSKLVTTLYGPFDVEFDEMTNVDACQYTKCPTEPGKSQVLDYTLYIGKKLPQGTYTFKWKLWNPEETSQLCCFKTTIKIRK.

The first 18 residues, 1–18 (MAALHWLLLAALLGCTLA), serve as a signal peptide directing secretion. 3 disulfide bridges follow: Cys27/Cys141, Cys45/Cys51, and Cys95/Cys100. N-linked (GlcNAc...) asparagine glycosylation is present at Asn58.

N-glycosylated. Hemolymph (at protein level). Constitutively expressed mainly in fat body and also in hemocytes and secreted into hemolymph. Not detected in midgut, epidermis, or Malpighian tubule of naive larvae.

The protein localises to the secreted. Its function is as follows. Binds to lipopolysaccharide from a variety of Gram-negative bacteria and to lipid A. The sequence is that of MD-2-related lipid-recognition protein from Manduca sexta (Tobacco hawkmoth).